Reading from the N-terminus, the 400-residue chain is Exodeoxyribonuclease 7 large subunit (400 aa).

It belongs to the XseA family. Heterooligomer composed of large and small subunits.

It is found in the cytoplasm. The enzyme catalyses Exonucleolytic cleavage in either 5'- to 3'- or 3'- to 5'-direction to yield nucleoside 5'-phosphates.. Its function is as follows. Bidirectionally degrades single-stranded DNA into large acid-insoluble oligonucleotides, which are then degraded further into small acid-soluble oligonucleotides. The protein is Exodeoxyribonuclease 7 large subunit of Clostridium perfringens (strain 13 / Type A).